The sequence spans 242 residues: 3-dehydroquinate dehydratase (242 aa).

3-dehydroquinate contacts are provided by residues 39 to 41 (EIR) and R73. Catalysis depends on H135, which acts as the Proton donor/acceptor. Catalysis depends on K162, which acts as the Schiff-base intermediate with substrate. The 3-dehydroquinate site is built by R203 and Q228.

Belongs to the type-I 3-dehydroquinase family. In terms of assembly, homodimer.

The catalysed reaction is 3-dehydroquinate = 3-dehydroshikimate + H2O. The protein operates within metabolic intermediate biosynthesis; chorismate biosynthesis; chorismate from D-erythrose 4-phosphate and phosphoenolpyruvate: step 3/7. Involved in the third step of the chorismate pathway, which leads to the biosynthesis of aromatic amino acids. Catalyzes the cis-dehydration of 3-dehydroquinate (DHQ) and introduces the first double bond of the aromatic ring to yield 3-dehydroshikimate. This chain is 3-dehydroquinate dehydratase, found in Methanosarcina barkeri (strain Fusaro / DSM 804).